Here is a 68-residue protein sequence, read N- to C-terminus: Large ribosomal subunit protein uL29 (68 aa).

It belongs to the universal ribosomal protein uL29 family.

The polypeptide is Large ribosomal subunit protein uL29 (Streptococcus sanguinis (strain SK36)).